Consider the following 142-residue polypeptide: Relaxin-3 (142 aa).

The first 25 residues, Met-1–Ala-25, serve as a signal peptide directing secretion. 3 disulfides stabilise this stretch: Cys-35–Cys-129, Cys-47–Cys-142, and Cys-128–Cys-133. Positions Ser-55 to Arg-118 are cleaved as a propeptide — connecting peptide.

Belongs to the insulin family. In terms of assembly, heterodimer of a B chain and an A chain linked by two disulfide bonds.

It is found in the secreted. Functionally, may play a role in neuropeptide signaling processes. Ligand for LGR7, RXFP3 and RXFP4. This is Relaxin-3 (RLN3) from Homo sapiens (Human).